Consider the following 155-residue polypeptide: Large ribosomal subunit protein uL15 (155 aa).

Over residues 1–13 the composition is skewed to basic and acidic residues; that stretch reads MKLNELRDCEGAT. The interval 1–47 is disordered; sequence MKLNELRDCEGATKNRKRIGRGIGSGTGKTGGRGVKGQKSRSGVSLN. Residues 21 to 35 show a composition bias toward gly residues; it reads RGIGSGTGKTGGRGV.

The protein belongs to the universal ribosomal protein uL15 family. Part of the 50S ribosomal subunit.

Functionally, binds to the 23S rRNA. This chain is Large ribosomal subunit protein uL15, found in Bartonella tribocorum (strain CIP 105476 / IBS 506).